The chain runs to 155 residues: 17.6 kDa class I heat shock protein 1 (155 aa).

One can recognise a sHSP domain in the interval S39–S154.

Belongs to the small heat shock protein (HSP20) family. As to quaternary structure, forms oligomeric structures. Binds to AKR2A.

The protein resides in the cytoplasm. Functionally, possesses chaperone activity. The chain is 17.6 kDa class I heat shock protein 1 (HSP17.6A) from Arabidopsis thaliana (Mouse-ear cress).